We begin with the raw amino-acid sequence, 97 residues long: uncharacterized protein (97 aa).

It to M.thermoautotrophicum MTH1236.

This is an uncharacterized protein from Methanocaldococcus jannaschii (strain ATCC 43067 / DSM 2661 / JAL-1 / JCM 10045 / NBRC 100440) (Methanococcus jannaschii).